The chain runs to 105 residues: UPF0145 protein lpp0255 (105 aa).

It belongs to the UPF0145 family.

The protein is UPF0145 protein lpp0255 of Legionella pneumophila (strain Paris).